Here is a 513-residue protein sequence, read N- to C-terminus: Histidine ammonia-lyase (513 aa).

The 5-imidazolinone (Ala-Gly) cross-link spans 144 to 146 (ASG). 2,3-didehydroalanine (Ser) is present on Ser-145.

It belongs to the PAL/histidase family. Post-translationally, contains an active site 4-methylidene-imidazol-5-one (MIO), which is formed autocatalytically by cyclization and dehydration of residues Ala-Ser-Gly.

Its subcellular location is the cytoplasm. It catalyses the reaction L-histidine = trans-urocanate + NH4(+). The protein operates within amino-acid degradation; L-histidine degradation into L-glutamate; N-formimidoyl-L-glutamate from L-histidine: step 1/3. The protein is Histidine ammonia-lyase of Streptococcus pyogenes serotype M5 (strain Manfredo).